The primary structure comprises 1650 residues: Transmembrane domain-containing protein DDB_G0287209 (1650 aa).

The stretch at 194–225 (NNNNNNFNNNNNNNNNNNNNKNNYNNNKSNLI) forms a coiled coil. Disordered regions lie at residues 197-216 (NNNF…NKNN) and 1218-1296 (ENQF…NINN). Residues 1224 to 1284 (NNNENSGSSG…SNSNENNYNG (61 aa)) are compositionally biased toward low complexity. 9 helical membrane passes run 1314 to 1334 (PLLL…LSLF), 1347 to 1369 (ILFL…LQLF), 1390 to 1410 (ISIS…DVTS), 1454 to 1474 (WNIY…LIVP), 1489 to 1509 (ILFI…VILF), 1515 to 1535 (WWDL…VTLL), 1539 to 1559 (PVYF…QFAF), 1570 to 1590 (VENL…TSII), and 1595 to 1615 (FNLI…ITII).

The protein resides in the membrane. The chain is Transmembrane domain-containing protein DDB_G0287209 from Dictyostelium discoideum (Social amoeba).